The following is a 95-amino-acid chain: Aspartyl/glutamyl-tRNA(Asn/Gln) amidotransferase subunit C (95 aa).

Belongs to the GatC family. Heterotrimer of A, B and C subunits.

The enzyme catalyses L-glutamyl-tRNA(Gln) + L-glutamine + ATP + H2O = L-glutaminyl-tRNA(Gln) + L-glutamate + ADP + phosphate + H(+). It catalyses the reaction L-aspartyl-tRNA(Asn) + L-glutamine + ATP + H2O = L-asparaginyl-tRNA(Asn) + L-glutamate + ADP + phosphate + 2 H(+). Allows the formation of correctly charged Asn-tRNA(Asn) or Gln-tRNA(Gln) through the transamidation of misacylated Asp-tRNA(Asn) or Glu-tRNA(Gln) in organisms which lack either or both of asparaginyl-tRNA or glutaminyl-tRNA synthetases. The reaction takes place in the presence of glutamine and ATP through an activated phospho-Asp-tRNA(Asn) or phospho-Glu-tRNA(Gln). This Chlorobaculum parvum (strain DSM 263 / NCIMB 8327) (Chlorobium vibrioforme subsp. thiosulfatophilum) protein is Aspartyl/glutamyl-tRNA(Asn/Gln) amidotransferase subunit C.